A 674-amino-acid chain; its full sequence is MNKIILEDLKESNVPLYIPQILPHQLATLDFLNERSLKEKKSVLLFHKMGSGKTIISLLFSIIASIETKILIILPNTSIMDIWISKLYDSLLLLNKNDKYNLNNIEFTTRSRLNEELLGTNKNINDIITENIKKYDNYIIIIDEAHNFFGNASGELLIHIKQNSTARYVLLTGSPISNTIESLKDIVELLTNETFEYNKYIESAGNKVFQQRINKQGIELLKNKLTGLISYYDEDRKDIPSPIFQGNIKLLNYPVVLCPMSKLQEDNYNMISNQTENDMFIKLMMNVSLVALGDKENYTNFDLLMASNKQIFPNFYVSNGKFIGQELIDLNISSKLKYFMNSILTSPNAGKRFIYFANSTIGSTIIRSVMIANGISEYDKEIVNNFVCVNCLKERNCNNKECIPMKFVIITSKESNKGNNSYINKILSVFNEDVNENGSVIMFLFGSRIIAEAYTLKDIKEIWFLTVPETKSELEQCIARAIRSFAYKDKNTRVVVRICLATTPNALSNEISQIIEKYKDESLSDEEKTLLLNKFEMKLVNYAIDLPYDLRKQLYSEFKSEKAKVAYNIFINLSILTNNILNDNILKCFIIEKIRRYSYENSRYKLKDILSYIKKNLKFDYKNKIEDYVNEFVNDGVVVYNKSFGTCYIDWFKDDIVVKQIILEFNNYLLSYNY.

Residues 34–193 (ERSLKEKKSV…KDIVELLTNE (160 aa)) form the Helicase ATP-binding domain. Residue 45–52 (LFHKMGSG) participates in ATP binding. The DEXH box signature appears at 135 to 138 (YDNY).

It belongs to the helicase family. VETF subfamily. Heterodimer of a 70 kDa and a 82 kDa subunit. Part of the early transcription complex composed of ETF, RAP94, and the DNA-directed RNA polymerase.

The protein resides in the virion. Functionally, acts with RNA polymerase to initiate transcription from early gene promoters. Is recruited by the RPO-associated protein of 94 kDa (RAP94) to form the early transcription complex, which also contains the core RNA polymerase. ETF heterodimer binds to early gene promoters. This Melanoplus sanguinipes entomopoxvirus (MsEPV) protein is Early transcription factor 70 kDa subunit (VETFS).